A 78-amino-acid polypeptide reads, in one-letter code: RNA-binding protein Hfq (78 aa).

The 60-residue stretch at 10 to 69 folds into the Sm domain; the sequence is DPFLNALRREHVPVSIYLVNGIKLQGQVESFDQYVVLLKNTVTQMVYKHAISTVVPARPV.

This sequence belongs to the Hfq family. In terms of assembly, homohexamer.

Its function is as follows. RNA chaperone that binds small regulatory RNA (sRNAs) and mRNAs to facilitate mRNA translational regulation in response to envelope stress, environmental stress and changes in metabolite concentrations. Also binds with high specificity to tRNAs. The protein is RNA-binding protein Hfq of Dechloromonas aromatica (strain RCB).